A 164-amino-acid polypeptide reads, in one-letter code: Phosphopantetheine adenylyltransferase (164 aa).

Ser-9 serves as a coordination point for substrate. ATP is bound by residues 9–10 (SF) and His-17. The substrate site is built by Lys-41, Ala-78, and Arg-92. Residues 93–95 (GLR), Glu-103, and 128–134 (SRPITAT) each bind ATP.

It belongs to the bacterial CoaD family. As to quaternary structure, homohexamer. It depends on Mg(2+) as a cofactor.

It is found in the cytoplasm. It catalyses the reaction (R)-4'-phosphopantetheine + ATP + H(+) = 3'-dephospho-CoA + diphosphate. It participates in cofactor biosynthesis; coenzyme A biosynthesis; CoA from (R)-pantothenate: step 4/5. Functionally, reversibly transfers an adenylyl group from ATP to 4'-phosphopantetheine, yielding dephospho-CoA (dPCoA) and pyrophosphate. The protein is Phosphopantetheine adenylyltransferase of Allorhizobium ampelinum (strain ATCC BAA-846 / DSM 112012 / S4) (Agrobacterium vitis (strain S4)).